Here is a 168-residue protein sequence, read N- to C-terminus: MSTPAKRRLMRDFKRMQQDAPSGVSASPLPDNVMSWNAVIIGPADTPFEDGTFRLILQFDEQYPNKPPSVKFISEMFHPNVYASGELCLDILQNRWSPTYDVSSILTSIQSLLNDPNISSPANVEAANLYKDHRSQYIKRVRETVENSWNEDDEDEDEDEDEDIDDAE.

Residues 4–150 (PAKRRLMRDF…VRETVENSWN (147 aa)) form the UBC core domain. Cysteine 88 acts as the Glycyl thioester intermediate in catalysis. Positions 143–168 (ETVENSWNEDDEDEDEDEDEDIDDAE) are disordered. Residues 149 to 168 (WNEDDEDEDEDEDEDIDDAE) are compositionally biased toward acidic residues.

It belongs to the ubiquitin-conjugating enzyme family.

The protein localises to the cytoplasm. It localises to the nucleus. The catalysed reaction is S-ubiquitinyl-[E1 ubiquitin-activating enzyme]-L-cysteine + [E2 ubiquitin-conjugating enzyme]-L-cysteine = [E1 ubiquitin-activating enzyme]-L-cysteine + S-ubiquitinyl-[E2 ubiquitin-conjugating enzyme]-L-cysteine.. It participates in protein modification; protein ubiquitination. Functionally, catalyzes the covalent attachment of ubiquitin to other proteins. Plays a role in transcription regulation by catalyzing the monoubiquitination of histone H2B to form H2BK123ub1. H2BK123ub1 gives a specific tag for epigenetic transcriptional activation and is also a prerequisite for H3K4me and H3K79me formation. Also involved in postreplication repair of UV-damaged DNA, in N-end rule-dependent protein degradation and in sporulation. The sequence is that of Ubiquitin-conjugating enzyme E2 2 (UBC2) from Debaryomyces hansenii (strain ATCC 36239 / CBS 767 / BCRC 21394 / JCM 1990 / NBRC 0083 / IGC 2968) (Yeast).